The following is a 198-amino-acid chain: SOSS complex subunit B2 (198 aa).

The segment at residues 26–89 is a DNA-binding region (OB); that stretch reads IVLEIGRVTK…SMWKGCLTLY (64 aa). The interval 114–198 is disordered; sequence EPNPDYRGQQ…ARDPRRAFKR (85 aa). Polar residues-rich tracts occupy residues 136–151 and 173–188; these read STNT…QTGP and LPGT…TISN.

The protein belongs to the SOSS-B family. SOSS-B2 subfamily. As to quaternary structure, component of the SOSS complex, composed of SOSS-B (SOSS-B1/NABP2 or SOSS-B2/NABP1), SOSS-A/INTS3 and SOSS-C/INIP. SOSS complexes containing SOSS-B1/NABP2 are more abundant than complexes containing SOSS-B2/NABP1. As to expression, ubiquitous with high expression in the thymus.

It localises to the nucleus. In terms of biological role, component of the SOSS complex, a multiprotein complex that functions downstream of the MRN complex to promote DNA repair and G2/M checkpoint. In the SOSS complex, acts as a sensor of single-stranded DNA that binds to single-stranded DNA, in particular to polypyrimidines. The SOSS complex associates with DNA lesions and influences diverse endpoints in the cellular DNA damage response including cell-cycle checkpoint activation, recombinational repair and maintenance of genomic stability. Required for efficient homologous recombination-dependent repair of double-strand breaks (DSBs) and ATM-dependent signaling pathways. This chain is SOSS complex subunit B2 (Nabp1), found in Mus musculus (Mouse).